Reading from the N-terminus, the 176-residue chain is Large ribosomal subunit protein uL10 (176 aa).

The protein belongs to the universal ribosomal protein uL10 family. As to quaternary structure, part of the ribosomal stalk of the 50S ribosomal subunit. The N-terminus interacts with L11 and the large rRNA to form the base of the stalk. The C-terminus forms an elongated spine to which L12 dimers bind in a sequential fashion forming a multimeric L10(L12)X complex.

In terms of biological role, forms part of the ribosomal stalk, playing a central role in the interaction of the ribosome with GTP-bound translation factors. The chain is Large ribosomal subunit protein uL10 from Streptomyces avermitilis (strain ATCC 31267 / DSM 46492 / JCM 5070 / NBRC 14893 / NCIMB 12804 / NRRL 8165 / MA-4680).